Here is a 513-residue protein sequence, read N- to C-terminus: Trigger factor (513 aa).

In terms of domain architecture, PPIase FKBP-type spans 164–249; that stretch reads GDQIIIDFLG…VKAVKNAGEF (86 aa). Residues 436–513 form a disordered region; it reads QAAIEAEEGA…KAPAKKKAEG (78 aa). Basic residues predominate over residues 452–461; sequence AKKAPAKKKA. Residues 489–498 show a composition bias toward low complexity; sequence ADEAPAAEEA. The segment covering 501 to 513 has biased composition (basic residues); it reads AKKKAPAKKKAEG.

It belongs to the FKBP-type PPIase family. Tig subfamily.

It is found in the cytoplasm. It catalyses the reaction [protein]-peptidylproline (omega=180) = [protein]-peptidylproline (omega=0). Functionally, involved in protein export. Acts as a chaperone by maintaining the newly synthesized protein in an open conformation. Functions as a peptidyl-prolyl cis-trans isomerase. This Novosphingobium aromaticivorans (strain ATCC 700278 / DSM 12444 / CCUG 56034 / CIP 105152 / NBRC 16084 / F199) protein is Trigger factor.